Reading from the N-terminus, the 443-residue chain is Proline--tRNA ligase (443 aa).

This sequence belongs to the class-II aminoacyl-tRNA synthetase family. ProS type 2 subfamily. Homodimer.

It localises to the cytoplasm. It carries out the reaction tRNA(Pro) + L-proline + ATP = L-prolyl-tRNA(Pro) + AMP + diphosphate. In terms of biological role, catalyzes the attachment of proline to tRNA(Pro) in a two-step reaction: proline is first activated by ATP to form Pro-AMP and then transferred to the acceptor end of tRNA(Pro). The polypeptide is Proline--tRNA ligase (Caulobacter vibrioides (strain ATCC 19089 / CIP 103742 / CB 15) (Caulobacter crescentus)).